Here is a 161-residue protein sequence, read N- to C-terminus: Terminase, small subunit (161 aa).

Positions lysine 37–leucine 60 are helix-turn-helix (HTH). The stretch at glutamate 88 to aspartate 115 forms a coiled coil. Positions 96, 100, 107, 114, and 128 each coordinate DNA.

Belongs to the Hendrixvirinae small terminase family. In terms of assembly, homononamer; forms a ring-like structure through which genomic DNA is translocated into the capsid. Interacts with the terminase small subunit; the active complex is composed of a pentamer ring of terminase large subunits and a nonamer ring of terminase small subunits. Binds a specific sequence on the viral genome. DNA transits through the central tunnel formed by the small subunit and sequence-specific recognition for packaging initiation and termination takes place as it emerges.

Its function is as follows. The terminase small subunit binds to the packaging initiation site and regulates the ATPase activity of the terminase large subunit. The terminase lies at a unique vertex of the procapsid and is composed of two subunits, a small terminase subunit involved in viral DNA recognition (packaging sequence), and a large terminase subunit possessing endonucleolytic and ATPase activities. Both terminase subunits heterooligomerize and are docked on the portal protein to form the packaging machine. Packaging initiates by TerS recognizing the packaging sequence in the viral DNA. The nuclease activity of TerL cuts the viral DNA and the terminase-DNA complex binds to the portal of a procapsid shell. DNA is translocated into the capsid, powered by the packaging ATPase in TerL, which continues until the next site is encountered at which point the motor stops and again cuts the DNA to release the nucleocapsid filled with a unit-length genome ('unit length' packaging). The chain is Terminase, small subunit (1) from Escherichia coli (Bacteriophage HK97).